The chain runs to 213 residues: Glutathione S-transferase PARB (213 aa).

A GST N-terminal domain is found at 1 to 82; it reads MAIKVHGSPM…YIAHVYADNG (82 aa). Glutathione contacts are provided by residues S11, 12–13, 40–41, 53–54, and 66–67; these read TA, HK, QV, and ES. The 125-residue stretch at 89-213 folds into the GST C-terminal domain; that stretch reads DPKKMPSMSV…WVKGLEKLQK (125 aa).

Belongs to the GST superfamily. Phi family.

The enzyme catalyses RX + glutathione = an S-substituted glutathione + a halide anion + H(+). Its function is as follows. Conjugation of reduced glutathione to a wide number of exogenous and endogenous hydrophobic electrophiles. In Nicotiana tabacum (Common tobacco), this protein is Glutathione S-transferase PARB.